A 182-amino-acid polypeptide reads, in one-letter code: CDP-diacylglycerol--glycerol-3-phosphate 3-phosphatidyltransferase (182 aa).

Residues 2–12 are Cytoplasmic-facing; that stretch reads QFNIPTLLTLF. The helical transmembrane segment at 13–37 threads the bilayer; sequence RVILIPFLVVVFYLPFAWAPMVSAL. Topologically, residues 38–60 are periplasmic; it reads IFCIAAITDWFDGFLARRWNQST. The helical transmembrane segment at 61-81 threads the bilayer; it reads RFGAFLDPVADKVLVAIAMVL. Topologically, residues 82 to 86 are cytoplasmic; that stretch reads VTEHY. Residues 87-107 form a helical membrane-spanning segment; it reads HSWWVTLPAATMIAREIIISA. The Periplasmic segment spans residues 108–145; that stretch reads LREWMAELGKRSSVAVSWIGKVKTTAQMVALAWLLWRP. The chain crosses the membrane as a helical span at residues 146-168; the sequence is NIWVEYAGIALFFVAAVLTLWSM. Over 169-181 the chain is Cytoplasmic; sequence LQYLSAARGDLLD.

Belongs to the CDP-alcohol phosphatidyltransferase class-I family.

The protein localises to the cell inner membrane. It catalyses the reaction a CDP-1,2-diacyl-sn-glycerol + sn-glycerol 3-phosphate = a 1,2-diacyl-sn-glycero-3-phospho-(1'-sn-glycero-3'-phosphate) + CMP + H(+). It functions in the pathway phospholipid metabolism; phosphatidylglycerol biosynthesis; phosphatidylglycerol from CDP-diacylglycerol: step 1/2. Its function is as follows. Catalyzes the conversion of cytidine diphosphate diacylglycerol (CDP-DG) and glycerol 3-phosphate into phosphatidylglycerol. Essential for the synthesis of anionic phospholipids, thereby playing a role in balancing the ratio of zwitterionic and anionic phospholipids, which is thought to be important for normal membrane function. The polypeptide is CDP-diacylglycerol--glycerol-3-phosphate 3-phosphatidyltransferase (Salmonella choleraesuis (strain SC-B67)).